Consider the following 261-residue polypeptide: Calbindin (261 aa).

At alanine 2 the chain carries N-acetylalanine. Positions 2–7 (AESHLQ) are interaction with RANBP9. EF-hand domains lie at 11–46 (ITAS…LLQA), 53–88 (ELSP…EENF), 98–133 (KSCE…LLEK), 142–177 (KLAE…QENF), and 186–221 (MCGK…LCEK). Ca(2+) is bound by residues aspartate 24, aspartate 26, serine 28, tyrosine 30, and glutamate 35. Residues aspartate 111, aspartate 113, serine 115, glutamate 122, aspartate 155, asparagine 157, aspartate 159, lysine 161, glutamate 166, aspartate 199, aspartate 201, asparagine 203, tyrosine 205, and glutamate 210 each contribute to the Ca(2+) site.

Belongs to the calbindin family. Interacts with RANBP9.

Its function is as follows. Buffers cytosolic calcium. May stimulate a membrane Ca(2+)-ATPase and a 3',5'-cyclic nucleotide phosphodiesterase. This Rattus norvegicus (Rat) protein is Calbindin (Calb1).